An 89-amino-acid polypeptide reads, in one-letter code: Small ribosomal subunit protein uS14A (89 aa).

It belongs to the universal ribosomal protein uS14 family. Part of the 30S ribosomal subunit. Contacts proteins S3 and S10.

Its function is as follows. Binds 16S rRNA, required for the assembly of 30S particles and may also be responsible for determining the conformation of the 16S rRNA at the A site. The protein is Small ribosomal subunit protein uS14A of Streptococcus equi subsp. zooepidemicus (strain MGCS10565).